Reading from the N-terminus, the 290-residue chain is ATP synthase gamma chain (290 aa).

Belongs to the ATPase gamma chain family. F-type ATPases have 2 components, CF(1) - the catalytic core - and CF(0) - the membrane proton channel. CF(1) has five subunits: alpha(3), beta(3), gamma(1), delta(1), epsilon(1). CF(0) has three main subunits: a, b and c.

The protein localises to the cell inner membrane. In terms of biological role, produces ATP from ADP in the presence of a proton gradient across the membrane. The gamma chain is believed to be important in regulating ATPase activity and the flow of protons through the CF(0) complex. This is ATP synthase gamma chain from Chlorobium luteolum (strain DSM 273 / BCRC 81028 / 2530) (Pelodictyon luteolum).